A 711-amino-acid polypeptide reads, in one-letter code: Ribosomal RNA large subunit methyltransferase K/L (711 aa).

The region spanning 42 to 153 (DAQRAVLWSR…KGRATISVDL (112 aa)) is the THUMP domain.

The protein belongs to the methyltransferase superfamily. RlmKL family.

The protein localises to the cytoplasm. The catalysed reaction is guanosine(2445) in 23S rRNA + S-adenosyl-L-methionine = N(2)-methylguanosine(2445) in 23S rRNA + S-adenosyl-L-homocysteine + H(+). It carries out the reaction guanosine(2069) in 23S rRNA + S-adenosyl-L-methionine = N(2)-methylguanosine(2069) in 23S rRNA + S-adenosyl-L-homocysteine + H(+). Specifically methylates the guanine in position 2445 (m2G2445) and the guanine in position 2069 (m7G2069) of 23S rRNA. The protein is Ribosomal RNA large subunit methyltransferase K/L of Xanthomonas oryzae pv. oryzae (strain MAFF 311018).